A 283-amino-acid chain; its full sequence is ATP phosphoribosyltransferase (283 aa).

Belongs to the ATP phosphoribosyltransferase family. Long subfamily. It depends on Mg(2+) as a cofactor.

The protein resides in the cytoplasm. The catalysed reaction is 1-(5-phospho-beta-D-ribosyl)-ATP + diphosphate = 5-phospho-alpha-D-ribose 1-diphosphate + ATP. It functions in the pathway amino-acid biosynthesis; L-histidine biosynthesis; L-histidine from 5-phospho-alpha-D-ribose 1-diphosphate: step 1/9. Feedback inhibited by histidine. Functionally, catalyzes the condensation of ATP and 5-phosphoribose 1-diphosphate to form N'-(5'-phosphoribosyl)-ATP (PR-ATP). Has a crucial role in the pathway because the rate of histidine biosynthesis seems to be controlled primarily by regulation of HisG enzymatic activity. This is ATP phosphoribosyltransferase from Rhodococcus jostii (strain RHA1).